We begin with the raw amino-acid sequence, 352 residues long: Ferrochelatase (352 aa).

The Fe cation site is built by histidine 222 and glutamate 303.

This sequence belongs to the ferrochelatase family.

The protein resides in the cytoplasm. The enzyme catalyses heme b + 2 H(+) = protoporphyrin IX + Fe(2+). It functions in the pathway porphyrin-containing compound metabolism; protoheme biosynthesis; protoheme from protoporphyrin-IX: step 1/1. In terms of biological role, catalyzes the ferrous insertion into protoporphyrin IX. The polypeptide is Ferrochelatase (Brucella melitensis biotype 2 (strain ATCC 23457)).